Consider the following 1523-residue polypeptide: Lysophospholipase nte1 (1523 aa).

Topologically, residues 1–66 (MADGVTLVDS…LPPVPTTMAG (66 aa)) are cytoplasmic. Residues 67 to 87 (WIGWVFSFFFQVIPSVLYWVI) traverse the membrane as a helical segment. Topologically, residues 88 to 109 (TFSTITLPTWLFTLFSMSLTFT) are lumenal. Residues 110–130 (MNFTTLLLIVLAMVSTISWFI) form a helical membrane-spanning segment. At 131–1523 (RYRFLNMYSR…RTMAPRRASI (1393 aa)) the chain is on the cytoplasmic side. 2 disordered regions span residues 309–384 (VPNS…KSVH) and 524–545 (RAAT…GVSP). Over residues 370–382 (ESRKHSSRKRRKS) the composition is skewed to basic residues. A nucleoside 3',5'-cyclic phosphate-binding positions include 681-800 (GGTS…GAVA) and 841-961 (RLTS…IAQR). The PNPLA domain occupies 1220 to 1384 (LVLGGGGARG…IDNLTVDHMK (165 aa)). The GXGXXG motif lies at 1224–1229 (GGGARG). The GXSXG signature appears at 1251–1255 (GTSIG). S1253 (nucleophile) is an active-site residue. D1371 acts as the Proton acceptor in catalysis. The short motif at 1371–1373 (DGG) is the DGA/G element. The interval 1502–1523 (LPEETEEKKKLQRTMAPRRASI) is disordered.

The protein belongs to the NTE family.

The protein resides in the endoplasmic reticulum membrane. It carries out the reaction a 1-acyl-sn-glycero-3-phosphocholine + H2O = sn-glycerol 3-phosphocholine + a fatty acid + H(+). Inhibited by organophosphorus esters. In terms of biological role, intracellular phospholipase B that catalyzes the double deacylation of phosphatidylcholine (PC) to glycerophosphocholine (GroPCho). Plays an important role in membrane lipid homeostasis. Responsible for the rapid PC turnover in response to inositol, elevated temperatures, or when choline is present in the growth medium. The polypeptide is Lysophospholipase nte1 (nte1) (Neosartorya fischeri (strain ATCC 1020 / DSM 3700 / CBS 544.65 / FGSC A1164 / JCM 1740 / NRRL 181 / WB 181) (Aspergillus fischerianus)).